Consider the following 344-residue polypeptide: Dihydroorotate dehydrogenase (quinone) (344 aa).

FMN is bound by residues 65–69 and threonine 89; that span reads AGFDK. Substrate is bound at residue lysine 69. 114–118 lines the substrate pocket; sequence NRMGF. Positions 145 and 178 each coordinate FMN. Residue asparagine 178 participates in substrate binding. Catalysis depends on serine 181, which acts as the Nucleophile. Asparagine 183 serves as a coordination point for substrate. Lysine 215 and threonine 243 together coordinate FMN. 244–245 is a binding site for substrate; it reads NT. FMN-binding positions include glycine 269, glycine 298, and 319 to 320; that span reads YT.

The protein belongs to the dihydroorotate dehydrogenase family. Type 2 subfamily. As to quaternary structure, monomer. The cofactor is FMN.

Its subcellular location is the cell membrane. The catalysed reaction is (S)-dihydroorotate + a quinone = orotate + a quinol. It functions in the pathway pyrimidine metabolism; UMP biosynthesis via de novo pathway; orotate from (S)-dihydroorotate (quinone route): step 1/1. Its function is as follows. Catalyzes the conversion of dihydroorotate to orotate with quinone as electron acceptor. The chain is Dihydroorotate dehydrogenase (quinone) from Clavibacter michiganensis subsp. michiganensis (strain NCPPB 382).